The sequence spans 391 residues: Cilia- and flagella-associated protein 263 (391 aa).

The tract at residues Met-1 to Leu-21 is disordered. Coiled-coil stretches lie at residues Leu-95 to Leu-243 and Leu-294 to Tyr-369.

The protein belongs to the CFAP263 family. Forms a complex with CFAP184; the interaction is required for functional activity in cilia. Interacts with HAP1 and PCM1.

Its subcellular location is the cytoplasm. The protein resides in the cytoskeleton. The protein localises to the microtubule organizing center. It is found in the centrosome. It localises to the centriolar satellite. Its subcellular location is the cell projection. The protein resides in the cilium. Functionally, component of centriolar satellites contributing to primary cilium formation. In complex with CFAP263, acts as a regulator of ciliary beating that connects radial spoke 3 (RS3) to the inner dynein arm (IDA) and the nexin-dynein regulatory complex (N-DRC). The complex is positioned parallel to N-DRC and forms a connection between the arch at the base of RS3, the IDA tail and N-DRC. The polypeptide is Cilia- and flagella-associated protein 263 (CFAP263) (Bos taurus (Bovine)).